We begin with the raw amino-acid sequence, 307 residues long: D-alanine--D-alanine ligase (307 aa).

Residues 108–301 (KEVFAAAGLP…FPEFCAWMVE (194 aa)) form the ATP-grasp domain. 135 to 185 (LPPPYVVKPNCEGSSVGVYIVQADANGPPRLAPDMPRDLMVETYIPGRELT) lines the ATP pocket. The Mg(2+) site is built by D252, E268, and N270.

It belongs to the D-alanine--D-alanine ligase family. The cofactor is Mg(2+). Requires Mn(2+) as cofactor.

It is found in the cytoplasm. The enzyme catalyses 2 D-alanine + ATP = D-alanyl-D-alanine + ADP + phosphate + H(+). It participates in cell wall biogenesis; peptidoglycan biosynthesis. Its function is as follows. Cell wall formation. In Cereibacter sphaeroides (strain ATCC 17025 / ATH 2.4.3) (Rhodobacter sphaeroides), this protein is D-alanine--D-alanine ligase.